The chain runs to 622 residues: MYRTRSSDEVATLTDPTSSSDVATSADPTSSSAVTTLVDPTTSVVISTSVDQTSSSDVATSVDPTTSVISSTSADPTTSADSTTSTVQTTSVDPTSSVVSSSSADLSSSVISSSSADPTTSTVQTTSVDPTSSVVSSSSADLSSSVISSSSADPTTSTVQTTSVDPTSSVVSSAPVDPASSVVSLTSSYPTSSSTVTISANSNGSATLTAQTTSIDPVSSIVSSSGATTIISSASIDPASSVVSSTSSEPTSFIVSSTSVYSTRPSGPTTSTDLATFSDTIILRVSTTSTSQDTQTVSSSLTDMVSSTGSADLSVSSIQRSQVDPSTFAVSNSPVYPTASTGSTSTGIPIASESLSLSRQQGISATSSSSIVTLTPVDSASSSRSSATSIIKPNMPVSSNDSKTQSSVSVVDTFQSTKSSYPSITSADPTTLASENGLVGSSSSAHPITLDRTYASAHASVTDIVSRVTDSTRHTTLVTSNINIQSEVGNLNYSGPKDTTITKQSAFMTSPASTSTISNVQSTASVMNHSIEDNISATASLESVSGTSTKDYSSQSSAIHYTNSFTTTTTNAFITSKHSIAAVSTGAITSSASISLIMEGSANIEAVGKLVWLAAALPLAFI.

Disordered stretches follow at residues 1–35, 47–200, and 374–405; these read MYRT…SAVT, STSV…TISA, and LTPV…SKTQ. Positions 14–35 are enriched in polar residues; it reads TDPTSSSDVATSADPTSSSAVT. Composition is skewed to low complexity over residues 47-199 and 379-389; these read STSV…VTIS and SASSSRSSATS. Positions 396-405 are enriched in polar residues; it reads PVSSNDSKTQ.

The sequence is that of Pheromone-regulated protein PRM7 (PRM7) from Saccharomyces cerevisiae (strain YJM789) (Baker's yeast).